A 323-amino-acid polypeptide reads, in one-letter code: Transposase for insertion sequence element IS6120 (323 aa).

Residues 300-323 form a disordered region; the sequence is ERPTDITPPTSPSDGGQHAGTEVA. Over residues 304-313 the composition is skewed to low complexity; it reads DITPPTSPSD.

This sequence belongs to the transposase mutator family.

In terms of biological role, required for the transposition of the insertion element. In Mycolicibacterium smegmatis (Mycobacterium smegmatis), this protein is Transposase for insertion sequence element IS6120.